We begin with the raw amino-acid sequence, 244 residues long: Phosphatidylserine decarboxylase proenzyme (244 aa).

Serine 212 acts as the Schiff-base intermediate with substrate; via pyruvic acid in catalysis. Serine 212 carries the post-translational modification Pyruvic acid (Ser); by autocatalysis.

This sequence belongs to the phosphatidylserine decarboxylase family. PSD-A subfamily. As to quaternary structure, heterodimer of a large membrane-associated beta subunit and a small pyruvoyl-containing alpha subunit. Requires pyruvate as cofactor. In terms of processing, is synthesized initially as an inactive proenzyme. Formation of the active enzyme involves a self-maturation process in which the active site pyruvoyl group is generated from an internal serine residue via an autocatalytic post-translational modification. Two non-identical subunits are generated from the proenzyme in this reaction, and the pyruvate is formed at the N-terminus of the alpha chain, which is derived from the carboxyl end of the proenzyme. The post-translation cleavage follows an unusual pathway, termed non-hydrolytic serinolysis, in which the side chain hydroxyl group of the serine supplies its oxygen atom to form the C-terminus of the beta chain, while the remainder of the serine residue undergoes an oxidative deamination to produce ammonia and the pyruvoyl prosthetic group on the alpha chain.

It localises to the cell membrane. It carries out the reaction a 1,2-diacyl-sn-glycero-3-phospho-L-serine + H(+) = a 1,2-diacyl-sn-glycero-3-phosphoethanolamine + CO2. Its pathway is phospholipid metabolism; phosphatidylethanolamine biosynthesis; phosphatidylethanolamine from CDP-diacylglycerol: step 2/2. Catalyzes the formation of phosphatidylethanolamine (PtdEtn) from phosphatidylserine (PtdSer). The sequence is that of Phosphatidylserine decarboxylase proenzyme from Granulibacter bethesdensis (strain ATCC BAA-1260 / CGDNIH1).